The chain runs to 167 residues: Lipoprotein signal peptidase (167 aa).

A run of 4 helical transmembrane segments spans residues 5–25, 42–62, 70–90, and 102–122; these read ICST…LDLG, LIPY…SFLA, WFFA…MYRA, and ALII…GFVI. Residues D123 and D141 contribute to the active site. The helical transmembrane segment at 137–157 threads the bilayer; the sequence is FNIADMAICIGAGLVIIDSFL.

Belongs to the peptidase A8 family.

It is found in the cell inner membrane. It catalyses the reaction Release of signal peptides from bacterial membrane prolipoproteins. Hydrolyzes -Xaa-Yaa-Zaa-|-(S,diacylglyceryl)Cys-, in which Xaa is hydrophobic (preferably Leu), and Yaa (Ala or Ser) and Zaa (Gly or Ala) have small, neutral side chains.. Its pathway is protein modification; lipoprotein biosynthesis (signal peptide cleavage). Functionally, this protein specifically catalyzes the removal of signal peptides from prolipoproteins. This chain is Lipoprotein signal peptidase, found in Photorhabdus laumondii subsp. laumondii (strain DSM 15139 / CIP 105565 / TT01) (Photorhabdus luminescens subsp. laumondii).